We begin with the raw amino-acid sequence, 691 residues long: Threonine--tRNA ligase (691 aa).

Residues 1–69 (MSTPEITPAA…QQDVEVAAVP (69 aa)) form the TGS domain. Residues 268–574 (DHRRLGQELD…LLEHYAGAFP (307 aa)) are catalytic. Zn(2+) contacts are provided by Cys373, His424, and His551.

Belongs to the class-II aminoacyl-tRNA synthetase family. Homodimer. Zn(2+) is required as a cofactor.

It is found in the cytoplasm. It catalyses the reaction tRNA(Thr) + L-threonine + ATP = L-threonyl-tRNA(Thr) + AMP + diphosphate + H(+). In terms of biological role, catalyzes the attachment of threonine to tRNA(Thr) in a two-step reaction: L-threonine is first activated by ATP to form Thr-AMP and then transferred to the acceptor end of tRNA(Thr). Also edits incorrectly charged L-seryl-tRNA(Thr). This chain is Threonine--tRNA ligase, found in Corynebacterium jeikeium (strain K411).